The primary structure comprises 460 residues: Decaprenylphosphoryl-beta-D-ribose oxidase (460 aa).

Positions 19–193 constitute an FAD-binding PCMH-type domain; sequence TAPTVASVLS…LRATIEMTPT (175 aa). Residues 52-62, Gly116, 121-124, 128-131, Ile183, and Tyr414 contribute to the FAD site; these read ARGLGRSYGDN, TVGG, and CDIH.

Belongs to the DprE1 family. As to quaternary structure, monomer. Interacts with DprE2 to form an epimerase complex.

The protein localises to the periplasm. It carries out the reaction trans,octa-cis-decaprenylphospho-beta-D-ribofuranose + FAD + H(+) = trans,octa-cis-decaprenylphospho-beta-D-erythro-pentofuranosid-2-ulose + FADH2. It participates in cell wall biogenesis; cell wall polysaccharide biosynthesis. Is inhibited by 8-nitro-benzothiazinones (BTZs) such as BTZ043; BTZs are a new class of antimycobacterial agents that block formation of both cell-wall lipoarabinomannan and arabinogalactan via inhibition of decaprenyl-phospho-arabinose (DPA) synthesis. BTZs are suicide inhibitors that act via covalent modification of DprE1; the essential nitro group of these compounds is reduced by DprE1 to a nitroso group, which then specifically reacts with Cys-386 of DprE1 to form an irreversible semimercaptal adduct. Other compounds with diverse scaffolds (dinitrobenzamides and nitrobenzoquinoxalines) also act as covalent DprE1 inhibitors. Its function is as follows. Component of the DprE1-DprE2 complex that catalyzes the 2-step epimerization of decaprenyl-phospho-ribose (DPR) to decaprenyl-phospho-arabinose (DPA), a key precursor that serves as the arabinose donor required for the synthesis of cell-wall arabinans. DprE1 catalyzes the first step of epimerization, namely FAD-dependent oxidation of the C2' hydroxyl of DPR to yield the keto intermediate decaprenyl-phospho-2'-keto-D-arabinose (DPX). The intermediate DPX is then transferred to DprE2 subunit of the epimerase complex, most probably through a 'substrate channel' at the interface of DprE1-DprE2 complex. Can also use farnesyl-phosphoryl-beta-D-ribofuranose (FPR) as substrate in vitro. Appears to be essential for the growth of M.smegmatis. This chain is Decaprenylphosphoryl-beta-D-ribose oxidase, found in Mycolicibacterium smegmatis (strain ATCC 700084 / mc(2)155) (Mycobacterium smegmatis).